The following is a 185-amino-acid chain: Ribosome-recycling factor (185 aa).

The interval 138–160 (AMDKAVKDGEVGEDEGARGEKEL) is disordered.

Belongs to the RRF family.

It is found in the cytoplasm. In terms of biological role, responsible for the release of ribosomes from messenger RNA at the termination of protein biosynthesis. May increase the efficiency of translation by recycling ribosomes from one round of translation to another. This chain is Ribosome-recycling factor, found in Micrococcus luteus (strain ATCC 4698 / DSM 20030 / JCM 1464 / CCM 169 / CCUG 5858 / IAM 1056 / NBRC 3333 / NCIMB 9278 / NCTC 2665 / VKM Ac-2230) (Micrococcus lysodeikticus).